The chain runs to 373 residues: Probable pectin lyase D (373 aa).

The signal sequence occupies residues 1 to 24 (MKYAAALTAVAALAARAAAVGVSG). 2 cysteine pairs are disulfide-bonded: Cys82-Cys101 and Cys91-Cys225. The N-linked (GlcNAc...) asparagine glycan is linked to Asn128. Arg255 is an active-site residue. Residue Asn274 is glycosylated (N-linked (GlcNAc...) asparagine). A disulfide bridge connects residues Cys321 and Cys329. Asn348 carries N-linked (GlcNAc...) asparagine glycosylation. The span at 354-366 (LPSADAASTSPAS) shows a compositional bias: low complexity. Residues 354–373 (LPSADAASTSPASNAGQGNL) are disordered.

This sequence belongs to the polysaccharide lyase 1 family.

It localises to the secreted. The enzyme catalyses Eliminative cleavage of (1-&gt;4)-alpha-D-galacturonan methyl ester to give oligosaccharides with 4-deoxy-6-O-methyl-alpha-D-galact-4-enuronosyl groups at their non-reducing ends.. Its function is as follows. Pectinolytic enzymes consist of four classes of enzymes: pectin lyase, polygalacturonase, pectin methylesterase and rhamnogalacturonase. Among pectinolytic enzymes, pectin lyase is the most important in depolymerization of pectin, since it cleaves internal glycosidic bonds of highly methylated pectins. This is Probable pectin lyase D (pelD) from Aspergillus niger (strain ATCC MYA-4892 / CBS 513.88 / FGSC A1513).